We begin with the raw amino-acid sequence, 530 residues long: RNA-binding protein 39 (530 aa).

Residues 1–146 (MADDIDIEAM…PVREPIDNLT (146 aa)) are disordered. The residue at position 2 (Ala-2) is an N-acetylalanine. Positions 14-32 (PYKKDENKLNSANGHEERS) are enriched in basic and acidic residues. Composition is skewed to basic residues over residues 33 to 56 (KKRK…KERK) and 64 to 95 (KKSK…RGRY). Tyr-95 is subject to Phosphotyrosine. Phosphoserine is present on residues Ser-97 and Ser-100. Residue Lys-111 forms a Glycyl lysine isopeptide (Lys-Gly) (interchain with G-Cter in SUMO2) linkage. Ser-117 is subject to Phosphoserine. A Glycyl lysine isopeptide (Lys-Gly) (interchain with G-Cter in SUMO2) cross-link involves residue Lys-119. Basic residues predominate over residues 119-130 (KLSRRRSRSKSP). A phosphoserine mark is found at Ser-121 and Ser-136. Residues 131–146 (FRKDKSPVREPIDNLT) are compositionally biased toward basic and acidic residues. Thr-146 carries the phosphothreonine modification. Positions 153–230 (RTVFCMQLAA…VPIIVQASQA (78 aa)) constitute an RRM 1 domain. Lys-244 participates in a covalent cross-link: Glycyl lysine isopeptide (Lys-Gly) (interchain with G-Cter in SUMO2). The region spanning 250–328 (MRLYVGSLHF…RPMKVGHVTE (79 aa)) is the RRM 2 domain. The tract at residues 291–355 (KGYGFITFSD…RTGIDLGTTG (65 aa)) is activating domain. Residues 291-406 (KGYGFITFSD…IDLQTRLSQQ (116 aa)) form an interaction with JUN region. Phosphoserine occurs at positions 334, 337, and 341. The interaction with ESR1 and ESR2 stretch occupies residues 355–406 (GRLQLMARLAEGTGLQIPPAAQQALQMSGSLAFGAVAEFSFVIDLQTRLSQQ). The interaction with NCOA6 stretch occupies residues 406–530 (QTEASALAAA…ATQLLVPSRR (125 aa)). Residues 445-508 (EIKDDVIEEC…KMITAAYVPL (64 aa)) form the RRM 3 domain.

Belongs to the splicing factor SR family. As to quaternary structure, interacts with NCOA6 and JUN. Interacts with ESR1 and ESR2, in the presence of estradiol (E2). Interacts with RSRC1 (via Arg/Ser-rich domain). Interacts with SF3B1. Interacts with ZNF106 (via N-terminus).

The protein localises to the nucleus. Its function is as follows. RNA-binding protein that acts as a pre-mRNA splicing factor. Acts by promoting exon inclusion via regulation of exon cassette splicing. Also acts as a transcriptional coactivator for steroid nuclear receptors ESR1/ER-alpha and ESR2/ER-beta, and JUN/AP-1, independently of the pre-mRNA splicing factor activity. The sequence is that of RNA-binding protein 39 (Rbm39) from Mus musculus (Mouse).